The primary structure comprises 165 residues: MALNLQDKQAIVAEVSEVAKGALSAVVADSRGVTVDKMTELRKAGREAGVYMRVVRNTLLRRAVEGTPFECLKDAFVGPTLIAYSMEHPGAAARLFKEFAKANAKFEVKAAAFEGELIPASQIDRLATLPTYEEAIARLMATMKEASAGKLVRTLAAVRDAKEAA.

Residues K37 and K105 each carry the N6-acetyllysine modification.

The protein belongs to the universal ribosomal protein uL10 family. As to quaternary structure, part of the ribosomal stalk of the 50S ribosomal subunit. The N-terminus interacts with L11 and the large rRNA to form the base of the stalk. The C-terminus forms an elongated spine to which L12 dimers bind in a sequential fashion forming a multimeric L10(L12)X complex.

Protein L10 is also a translational repressor protein. It controls the translation of the rplJL-rpoBC operon by binding to its mRNA. In terms of biological role, forms part of the ribosomal stalk, playing a central role in the interaction of the ribosome with GTP-bound translation factors. This chain is Large ribosomal subunit protein uL10 (rplJ), found in Escherichia coli O6:H1 (strain CFT073 / ATCC 700928 / UPEC).